A 281-amino-acid chain; its full sequence is Pantothenate synthetase (281 aa).

30–37 lines the ATP pocket; sequence MGYLHEGH. Residue His-37 is the Proton donor of the active site. Position 61 (Gln-61) interacts with (R)-pantoate. Gln-61 is a binding site for beta-alanine. 147 to 150 contributes to the ATP binding site; that stretch reads GEKD. Gln-153 is a binding site for (R)-pantoate. Residues Ile-176 and 184–187 contribute to the ATP site; that span reads KSSR.

It belongs to the pantothenate synthetase family. As to quaternary structure, homodimer.

It is found in the cytoplasm. It catalyses the reaction (R)-pantoate + beta-alanine + ATP = (R)-pantothenate + AMP + diphosphate + H(+). Its pathway is cofactor biosynthesis; (R)-pantothenate biosynthesis; (R)-pantothenate from (R)-pantoate and beta-alanine: step 1/1. Functionally, catalyzes the condensation of pantoate with beta-alanine in an ATP-dependent reaction via a pantoyl-adenylate intermediate. In Clostridium botulinum (strain Okra / Type B1), this protein is Pantothenate synthetase.